Here is a 248-residue protein sequence, read N- to C-terminus: UDP-2,3-diacylglucosamine hydrolase (248 aa).

Positions 8, 10, 41, 79, and 114 each coordinate Mn(2+). Substrate is bound at residue 79–80 (NR). The substrate site is built by D122, S160, D171, and H202. H202 and H204 together coordinate Mn(2+).

It belongs to the LpxH family. The cofactor is Mn(2+).

The protein localises to the cell inner membrane. The catalysed reaction is UDP-2-N,3-O-bis[(3R)-3-hydroxytetradecanoyl]-alpha-D-glucosamine + H2O = 2-N,3-O-bis[(3R)-3-hydroxytetradecanoyl]-alpha-D-glucosaminyl 1-phosphate + UMP + 2 H(+). It functions in the pathway glycolipid biosynthesis; lipid IV(A) biosynthesis; lipid IV(A) from (3R)-3-hydroxytetradecanoyl-[acyl-carrier-protein] and UDP-N-acetyl-alpha-D-glucosamine: step 4/6. Hydrolyzes the pyrophosphate bond of UDP-2,3-diacylglucosamine to yield 2,3-diacylglucosamine 1-phosphate (lipid X) and UMP by catalyzing the attack of water at the alpha-P atom. Involved in the biosynthesis of lipid A, a phosphorylated glycolipid that anchors the lipopolysaccharide to the outer membrane of the cell. The sequence is that of UDP-2,3-diacylglucosamine hydrolase from Stenotrophomonas maltophilia (strain R551-3).